A 224-amino-acid chain; its full sequence is uncharacterized protein (224 aa).

It is found in the virion. This is an uncharacterized protein from Acanthamoeba polyphaga mimivirus (APMV).